The following is a 313-amino-acid chain: Meiotically up-regulated gene 100 protein, mitochondrial (313 aa).

A run of 2 helical transmembrane segments spans residues 147–167 (VFDY…YTAG) and 178–198 (SGFI…TLTF).

It is found in the mitochondrion inner membrane. Has a role in meiosis. This is Meiotically up-regulated gene 100 protein, mitochondrial (mug100) from Schizosaccharomyces pombe (strain 972 / ATCC 24843) (Fission yeast).